The following is a 398-amino-acid chain: 4-hydroxy-3-methylbut-2-enyl diphosphate reductase (398 aa).

Residue Cys-66 participates in [4Fe-4S] cluster binding. Residue His-96 participates in (2E)-4-hydroxy-3-methylbut-2-enyl diphosphate binding. A dimethylallyl diphosphate-binding site is contributed by His-96. His-96 is a binding site for isopentenyl diphosphate. Cys-157 contributes to the [4Fe-4S] cluster binding site. Position 185 (His-185) interacts with (2E)-4-hydroxy-3-methylbut-2-enyl diphosphate. Residue His-185 participates in dimethylallyl diphosphate binding. His-185 provides a ligand contact to isopentenyl diphosphate. The Proton donor role is filled by Glu-187. (2E)-4-hydroxy-3-methylbut-2-enyl diphosphate is bound at residue Thr-250. Residue Cys-288 coordinates [4Fe-4S] cluster. Ser-317, Ser-318, Asn-319, and Ser-379 together coordinate (2E)-4-hydroxy-3-methylbut-2-enyl diphosphate. Positions 317, 318, 319, and 379 each coordinate dimethylallyl diphosphate. Isopentenyl diphosphate is bound by residues Ser-317, Ser-318, Asn-319, and Ser-379.

This sequence belongs to the IspH family. [4Fe-4S] cluster serves as cofactor.

The catalysed reaction is isopentenyl diphosphate + 2 oxidized [2Fe-2S]-[ferredoxin] + H2O = (2E)-4-hydroxy-3-methylbut-2-enyl diphosphate + 2 reduced [2Fe-2S]-[ferredoxin] + 2 H(+). The enzyme catalyses dimethylallyl diphosphate + 2 oxidized [2Fe-2S]-[ferredoxin] + H2O = (2E)-4-hydroxy-3-methylbut-2-enyl diphosphate + 2 reduced [2Fe-2S]-[ferredoxin] + 2 H(+). It participates in isoprenoid biosynthesis; dimethylallyl diphosphate biosynthesis; dimethylallyl diphosphate from (2E)-4-hydroxy-3-methylbutenyl diphosphate: step 1/1. Its pathway is isoprenoid biosynthesis; isopentenyl diphosphate biosynthesis via DXP pathway; isopentenyl diphosphate from 1-deoxy-D-xylulose 5-phosphate: step 6/6. Functionally, catalyzes the conversion of 1-hydroxy-2-methyl-2-(E)-butenyl 4-diphosphate (HMBPP) into a mixture of isopentenyl diphosphate (IPP) and dimethylallyl diphosphate (DMAPP). Acts in the terminal step of the DOXP/MEP pathway for isoprenoid precursor biosynthesis. The protein is 4-hydroxy-3-methylbut-2-enyl diphosphate reductase of Prochlorococcus marinus (strain MIT 9313).